A 302-amino-acid polypeptide reads, in one-letter code: Lipoyl synthase (302 aa).

Residues Cys-54, Cys-59, Cys-65, Cys-80, Cys-84, Cys-87, and Ser-291 each contribute to the [4Fe-4S] cluster site. The region spanning 66-280 is the Radical SAM core domain; it reads WSRKTATYML…RIYGKSIGFK (215 aa).

The protein belongs to the radical SAM superfamily. Lipoyl synthase family. The cofactor is [4Fe-4S] cluster.

The protein localises to the cytoplasm. It carries out the reaction [[Fe-S] cluster scaffold protein carrying a second [4Fe-4S](2+) cluster] + N(6)-octanoyl-L-lysyl-[protein] + 2 oxidized [2Fe-2S]-[ferredoxin] + 2 S-adenosyl-L-methionine + 4 H(+) = [[Fe-S] cluster scaffold protein] + N(6)-[(R)-dihydrolipoyl]-L-lysyl-[protein] + 4 Fe(3+) + 2 hydrogen sulfide + 2 5'-deoxyadenosine + 2 L-methionine + 2 reduced [2Fe-2S]-[ferredoxin]. Its pathway is protein modification; protein lipoylation via endogenous pathway; protein N(6)-(lipoyl)lysine from octanoyl-[acyl-carrier-protein]: step 2/2. Catalyzes the radical-mediated insertion of two sulfur atoms into the C-6 and C-8 positions of the octanoyl moiety bound to the lipoyl domains of lipoate-dependent enzymes, thereby converting the octanoylated domains into lipoylated derivatives. This Leptospira borgpetersenii serovar Hardjo-bovis (strain JB197) protein is Lipoyl synthase.